A 501-amino-acid chain; its full sequence is Aluminum-activated malate transporter 2 (501 aa).

6 helical membrane-spanning segments follow: residues 22–42 (VVHA…YYYQ), 52–72 (AMWA…ATLG), 78–98 (AVAT…ASLS), 101–121 (TVEP…STFV), 130–150 (RYDY…VSGF), and 166–186 (VIMG…VWAG). The interval 398–425 (FKNKKKPSKSNSGSIGQAMPNKSHDDDD) is disordered.

This sequence belongs to the aromatic acid exporter (TC 2.A.85) family.

It is found in the membrane. Malate transporter. The sequence is that of Aluminum-activated malate transporter 2 (ALMT2) from Arabidopsis thaliana (Mouse-ear cress).